Reading from the N-terminus, the 347-residue chain is NADH-quinone oxidoreductase subunit H (347 aa).

Helical transmembrane passes span 13–33 (LIIA…VAYL), 50–70 (PNVV…KFVF), 82–102 (GVFL…WAVI), 115–135 (VGIL…IMGG), 161–181 (IGFV…TDIV), 198–218 (FLDW…ISAL), 248–268 (FLLF…LMTV), 286–306 (VPGI…FAMV), and 325–345 (VFLP…KVFG).

It belongs to the complex I subunit 1 family. NDH-1 is composed of 14 different subunits. Subunits NuoA, H, J, K, L, M, N constitute the membrane sector of the complex.

It is found in the cell inner membrane. It carries out the reaction a quinone + NADH + 5 H(+)(in) = a quinol + NAD(+) + 4 H(+)(out). Its function is as follows. NDH-1 shuttles electrons from NADH, via FMN and iron-sulfur (Fe-S) centers, to quinones in the respiratory chain. The immediate electron acceptor for the enzyme in this species is believed to be ubiquinone. Couples the redox reaction to proton translocation (for every two electrons transferred, four hydrogen ions are translocated across the cytoplasmic membrane), and thus conserves the redox energy in a proton gradient. This subunit may bind ubiquinone. This is NADH-quinone oxidoreductase subunit H from Brucella abortus (strain 2308).